The following is a 220-amino-acid chain: Tumor protein D54 (220 aa).

Position 1 is an N-acetylmethionine (M1). Over residues 1 to 14 (MDSASQDINLNSPN) the composition is skewed to polar residues. Residues 1 to 26 (MDSASQDINLNSPNKGVLSDFMTDVP) are disordered. A phosphoserine mark is found at S3, S12, and S19. The stretch at 40–82 (GLTEVEEEELRAELAKVEEEIVTLRQVLAAKERHCGELKRRLG) forms a coiled coil. A phosphoserine mark is found at S96, S149, S168, and S175. T177 bears the Phosphothreonine mark. S180 carries the phosphoserine modification. T187 carries the post-translational modification Phosphothreonine. Positions 189–220 (KSKVVGGRENGSDTLPSSPGSGDQTLPDHAPF) are disordered. Positions 200–212 (SDTLPSSPGSGDQ) are enriched in polar residues. Residues S206 and S209 each carry the phosphoserine modification.

It belongs to the TPD52 family. Forms a homodimer or heterodimer with other members of the family. Interacts with MAL2.

This is Tumor protein D54 (Tpd52l2) from Rattus norvegicus (Rat).